Consider the following 401-residue polypeptide: Glyceraldehyde-3-phosphate dehydrogenase A, chloroplastic (401 aa).

Residues 1–65 (MASNMLSIAN…RSSQNGVVEA (65 aa)) constitute a chloroplast transit peptide. NADP(+)-binding positions include 76–77 (RI), aspartate 100, and arginine 145. Residues 217–219 (SCT), threonine 248, arginine 263, 276–277 (TG), and arginine 299 contribute to the D-glyceraldehyde 3-phosphate site. The active-site Nucleophile is the cysteine 218. Asparagine 381 lines the NADP(+) pocket.

It belongs to the glyceraldehyde-3-phosphate dehydrogenase family. As to quaternary structure, tetramer of either four A chains (GAPDH 2) or two A and two B chains (GAPDH 1).

Its subcellular location is the plastid. It localises to the chloroplast. It carries out the reaction D-glyceraldehyde 3-phosphate + phosphate + NADP(+) = (2R)-3-phospho-glyceroyl phosphate + NADPH + H(+). The protein operates within carbohydrate biosynthesis; Calvin cycle. This Spinacia oleracea (Spinach) protein is Glyceraldehyde-3-phosphate dehydrogenase A, chloroplastic (GAPA).